We begin with the raw amino-acid sequence, 447 residues long: 3-phosphoshikimate 1-carboxyvinyltransferase 2 (447 aa).

Residues Lys40, Ser41, and Arg45 each contribute to the 3-phosphoshikimate site. Lys40 is a phosphoenolpyruvate binding site. The phosphoenolpyruvate site is built by Gly109 and Arg138. Positions 184, 185, 186, 329, and 356 each coordinate 3-phosphoshikimate. Phosphoenolpyruvate is bound at residue Gln186. The Proton acceptor role is filled by Asp329. Arg360, Arg403, and Lys428 together coordinate phosphoenolpyruvate.

Belongs to the EPSP synthase family. Monomer.

Its subcellular location is the cytoplasm. The catalysed reaction is 3-phosphoshikimate + phosphoenolpyruvate = 5-O-(1-carboxyvinyl)-3-phosphoshikimate + phosphate. It functions in the pathway metabolic intermediate biosynthesis; chorismate biosynthesis; chorismate from D-erythrose 4-phosphate and phosphoenolpyruvate: step 6/7. In terms of biological role, catalyzes the transfer of the enolpyruvyl moiety of phosphoenolpyruvate (PEP) to the 5-hydroxyl of shikimate-3-phosphate (S3P) to produce enolpyruvyl shikimate-3-phosphate and inorganic phosphate. The polypeptide is 3-phosphoshikimate 1-carboxyvinyltransferase 2 (Halalkalibacterium halodurans (strain ATCC BAA-125 / DSM 18197 / FERM 7344 / JCM 9153 / C-125) (Bacillus halodurans)).